Consider the following 217-residue polypeptide: Probable GTP-binding protein EngB (217 aa).

Residues 31 to 205 (VGVEIAFAGR…LAILDAWCHP (175 aa)) form the EngB-type G domain. GTP is bound by residues 39 to 46 (GRSNAGKS), 66 to 70 (GRTQL), 84 to 87 (DLPG), 151 to 154 (TKAD), and 184 to 186 (FSA). Mg(2+) contacts are provided by Ser-46 and Thr-68.

Belongs to the TRAFAC class TrmE-Era-EngA-EngB-Septin-like GTPase superfamily. EngB GTPase family. The cofactor is Mg(2+).

Its function is as follows. Necessary for normal cell division and for the maintenance of normal septation. The protein is Probable GTP-binding protein EngB of Shewanella amazonensis (strain ATCC BAA-1098 / SB2B).